A 502-amino-acid chain; its full sequence is Intracellular exo-alpha-(1-&gt;5)-L-arabinofuranosidase (502 aa).

Glutamate 29, asparagine 74, and asparagine 174 together coordinate alpha-L-arabinofuranose. The active-site Proton donor/acceptor is the glutamate 175. 3 residues coordinate alpha-L-arabinofuranose: tyrosine 246, glutamate 294, and glutamine 351. Glutamate 294 serves as the catalytic Nucleophile.

This sequence belongs to the glycosyl hydrolase 51 family. As to quaternary structure, homohexamer; trimer of dimers.

It is found in the cytoplasm. It catalyses the reaction Hydrolysis of terminal non-reducing alpha-L-arabinofuranoside residues in alpha-L-arabinosides.. Its pathway is glycan metabolism; L-arabinan degradation. Its activity is regulated as follows. Strongly inhibited by Hg(2+). Involved in the degradation of arabinan and is a key enzyme in the complete degradation of the plant cell wall. Catalyzes the cleavage of terminal alpha-(1-&gt;5)-arabinofuranosyl bonds in different hemicellulosic homopolysaccharides (branched and debranched arabinans). It acts preferentially on aryl-alpha-L-arabinofuranosides, and is much less effective on aryl-beta-D-xylopyranosides. This is Intracellular exo-alpha-(1-&gt;5)-L-arabinofuranosidase (abfA) from Geobacillus stearothermophilus (Bacillus stearothermophilus).